The primary structure comprises 242 residues: Biosynthetic peptidoglycan transglycosylase (242 aa).

Residues 15-35 traverse the membrane as a helical segment; the sequence is FLLLLMVVLAVFWGGGIALFS.

Belongs to the glycosyltransferase 51 family.

The protein resides in the cell inner membrane. It catalyses the reaction [GlcNAc-(1-&gt;4)-Mur2Ac(oyl-L-Ala-gamma-D-Glu-L-Lys-D-Ala-D-Ala)](n)-di-trans,octa-cis-undecaprenyl diphosphate + beta-D-GlcNAc-(1-&gt;4)-Mur2Ac(oyl-L-Ala-gamma-D-Glu-L-Lys-D-Ala-D-Ala)-di-trans,octa-cis-undecaprenyl diphosphate = [GlcNAc-(1-&gt;4)-Mur2Ac(oyl-L-Ala-gamma-D-Glu-L-Lys-D-Ala-D-Ala)](n+1)-di-trans,octa-cis-undecaprenyl diphosphate + di-trans,octa-cis-undecaprenyl diphosphate + H(+). It participates in cell wall biogenesis; peptidoglycan biosynthesis. Functionally, peptidoglycan polymerase that catalyzes glycan chain elongation from lipid-linked precursors. The polypeptide is Biosynthetic peptidoglycan transglycosylase (Shigella sonnei (strain Ss046)).